Consider the following 621-residue polypeptide: 2-hydroxyacyl-CoA lyase 2 (621 aa).

Residues 7–29 (LGCSLGAALGGVIFASYKLGLLY) traverse the membrane as a helical segment. Position 87 (Glu87) interacts with thiamine diphosphate. The segment at 459–539 (DFVGSAAYIM…VIALVGNDAC (81 aa)) is thiamine pyrophosphate binding. The Mg(2+) site is built by Asp510 and Asn536.

It belongs to the TPP enzyme family. The cofactor is Mg(2+). Thiamine diphosphate is required as a cofactor.

It localises to the endoplasmic reticulum membrane. The enzyme catalyses 2-hydroxyoctadecanoyl-CoA = heptadecanal + formyl-CoA. It carries out the reaction (2R)-hydroxyhexadecanoyl-CoA = pentadecanal + formyl-CoA. In terms of biological role, endoplasmic reticulum 2-OH acyl-CoA lyase involved in the cleavage (C1 removal) reaction in the fatty acid alpha-oxydation in a thiamine pyrophosphate (TPP)-dependent manner. This chain is 2-hydroxyacyl-CoA lyase 2 (ilvbl), found in Danio rerio (Zebrafish).